The primary structure comprises 131 residues: Small ribosomal subunit protein uS8 (131 aa).

Belongs to the universal ribosomal protein uS8 family. In terms of assembly, part of the 30S ribosomal subunit. Contacts proteins S5 and S12.

Its function is as follows. One of the primary rRNA binding proteins, it binds directly to 16S rRNA central domain where it helps coordinate assembly of the platform of the 30S subunit. The chain is Small ribosomal subunit protein uS8 from Zymomonas mobilis subsp. mobilis (strain ATCC 31821 / ZM4 / CP4).